The primary structure comprises 323 residues: Rhazimal reductase 2 (323 aa).

Asp-53 lines the NADP(+) pocket. The active-site Proton donor is Tyr-58. NADP(+)-binding positions include 167-168 (SN), Gln-189, 215-220 (WSPLLS), and 289-297 (DQIQQIPQR).

This sequence belongs to the aldo/keto reductase family. In terms of assembly, monomer.

It catalyses the reaction rhazimol + NADP(+) = rhazimal + NADPH + 2 H(+). It participates in alkaloid biosynthesis. In terms of biological role, oxidoreductase involved in the biosynthesis of akuammilan monoterpene indole alkaloids (MIAs) natural products, components with various biological properties such as antidiabetic, antibacterial, anti-inflammatory, anticancer, and antimalarial activities. Catalyzes the conversion of rhazimal to rhazimol. This is Rhazimal reductase 2 from Alstonia scholaris (Dogbane).